A 342-amino-acid polypeptide reads, in one-letter code: Glycerol-1-phosphate dehydrogenase [NAD(P)+] (342 aa).

Residues 84-88 (GRPID) and 106-109 (TSAS) contribute to the NAD(+) site. Asp111 contributes to the substrate binding site. Ser115 is an NAD(+) binding site. Asp160 serves as a coordination point for substrate. Residues Asp160 and His241 each contribute to the Zn(2+) site. Residue His245 participates in substrate binding. His260 contacts Zn(2+).

Belongs to the glycerol-1-phosphate dehydrogenase family. In terms of assembly, homodimer. Requires Zn(2+) as cofactor.

Its subcellular location is the cytoplasm. It catalyses the reaction sn-glycerol 1-phosphate + NAD(+) = dihydroxyacetone phosphate + NADH + H(+). The enzyme catalyses sn-glycerol 1-phosphate + NADP(+) = dihydroxyacetone phosphate + NADPH + H(+). The protein operates within membrane lipid metabolism; glycerophospholipid metabolism. Catalyzes the NAD(P)H-dependent reduction of dihydroxyacetonephosphate (DHAP or glycerone phosphate) to glycerol 1-phosphate (G1P). The G1P thus generated is used as the glycerophosphate backbone of phospholipids in the cellular membranes of Archaea. The protein is Glycerol-1-phosphate dehydrogenase [NAD(P)+] of Pyrobaculum islandicum (strain DSM 4184 / JCM 9189 / GEO3).